The primary structure comprises 215 residues: MSLCLGFRELGLQPYEPVLEAMRRFTEQRSPDSQDEIWLVEHPAVFTQGQAGKAEHLLVPGDIPVVQTDRGGQVTYHGPGQLVAYLLLDVRRLGFGVRELVSRIEQTLIELLASYGVSAAAKPDAPGVYVDGAKIASLGLRIRNGRSFHGLALNVDMDLAPFRRINPCGYAGLAMTQLRDLAGPIELDEVRTRLRGQLVKHLDYAEQTTLTGGID.

A BPL/LPL catalytic domain is found at 31–206 (PDSQDEIWLV…QLVKHLDYAE (176 aa)). Substrate is bound by residues 70-77 (RGGQVTYH), 137-139 (SLG), and 150-152 (GLA). Cys-168 (acyl-thioester intermediate) is an active-site residue.

It belongs to the LipB family.

It localises to the cytoplasm. The enzyme catalyses octanoyl-[ACP] + L-lysyl-[protein] = N(6)-octanoyl-L-lysyl-[protein] + holo-[ACP] + H(+). Its pathway is protein modification; protein lipoylation via endogenous pathway; protein N(6)-(lipoyl)lysine from octanoyl-[acyl-carrier-protein]: step 1/2. In terms of biological role, catalyzes the transfer of endogenously produced octanoic acid from octanoyl-acyl-carrier-protein onto the lipoyl domains of lipoate-dependent enzymes. Lipoyl-ACP can also act as a substrate although octanoyl-ACP is likely to be the physiological substrate. This chain is Octanoyltransferase, found in Pseudomonas putida (strain W619).